We begin with the raw amino-acid sequence, 85 residues long: UPF0473 protein CPR_1590 (85 aa).

It belongs to the UPF0473 family.

The chain is UPF0473 protein CPR_1590 from Clostridium perfringens (strain SM101 / Type A).